The sequence spans 217 residues: Large ribosomal subunit protein uL3 (217 aa).

Belongs to the universal ribosomal protein uL3 family. As to quaternary structure, part of the 50S ribosomal subunit. Forms a cluster with proteins L14 and L19.

One of the primary rRNA binding proteins, it binds directly near the 3'-end of the 23S rRNA, where it nucleates assembly of the 50S subunit. This chain is Large ribosomal subunit protein uL3, found in Mycobacterium ulcerans (strain Agy99).